The chain runs to 144 residues: Cystatin-F (144 aa).

Residues 1-18 (MWLAILLALCCLTSDTHG) form the signal peptide. Asn-61 is a glycosylation site (N-linked (GlcNAc...) asparagine). Residues 80-84 (QVVKG) carry the Secondary area of contact motif. 2 cysteine pairs are disulfide-bonded: Cys-98/Cys-109 and Cys-123/Cys-143.

This sequence belongs to the cystatin family.

The protein localises to the secreted. Functionally, inhibits papain and cathepsin L but with affinities lower than other cystatins. May play a role in immune regulation through inhibition of a unique target in the hematopoietic system. This Mus musculus (Mouse) protein is Cystatin-F (Cst7).